The following is a 270-amino-acid chain: Tubulin-specific chaperone B (270 aa).

The CAP-Gly domain occupies 214–256 (GTVEFSSGVWIGVELDLPLGKNDGSVKGKQYFQCSPKYGCFAK).

The protein belongs to the TBCB family. Supercomplex made of cofactors A to E. Cofactors A and D function by capturing and stabilizing tubulin in a quasi-native conformation. Cofactor E binds to the cofactor D-tubulin complex; interaction with cofactor C then causes the release of tubulin polypeptides that are committed to the native state.

It is found in the cytoplasm. It localises to the cytoskeleton. Functionally, binds to alpha-tubulin folding intermediates after their interaction with cytosolic chaperonin in the pathway leading from newly synthesized tubulin to properly folded heterodimer. This Dictyostelium discoideum (Social amoeba) protein is Tubulin-specific chaperone B (tbcb).